A 372-amino-acid chain; its full sequence is Sesquiterpene synthase Agr9 (372 aa).

4 residues coordinate Mg(2+): aspartate 87, asparagine 225, serine 229, and glutamate 233. The DDXXD motif signature appears at 87-91 (DEYTD). 2 residues coordinate (2E,6E)-farnesyl diphosphate: arginine 314 and tyrosine 315.

It belongs to the terpene synthase family. It depends on Mg(2+) as a cofactor.

The catalysed reaction is (2E,6E)-farnesyl diphosphate = gamma-muurolene + diphosphate. It catalyses the reaction (2E,6E)-farnesyl diphosphate = delta-cadinene + diphosphate. Terpene cyclase that catalyzes the cyclization of farnesyl diphosphate (FPP) to various sesquiterpenes, including gamma-muurolene, beta-cadinene and delta-cadinene. The sequence is that of Sesquiterpene synthase Agr9 from Cyclocybe aegerita (Black poplar mushroom).